Reading from the N-terminus, the 341-residue chain is UPF0283 membrane protein VV2076 (341 aa).

The next 4 helical transmembrane spans lie at 64–84, 93–113, 207–227, and 255–275; these read LAGG…VDSV, WLTL…LGAM, ESAA…LVAW, and LVLA…AGMD.

It belongs to the UPF0283 family.

It localises to the cell inner membrane. The chain is UPF0283 membrane protein VV2076 from Vibrio vulnificus (strain YJ016).